We begin with the raw amino-acid sequence, 505 residues long: Deoxyguanosinetriphosphate triphosphohydrolase (505 aa).

The HD domain occupies 66–273 (RLTHSMEVQQ…MEAADDISYC (208 aa)).

It belongs to the dGTPase family. Type 1 subfamily. In terms of assembly, homotetramer. Requires Mg(2+) as cofactor.

It carries out the reaction dGTP + H2O = 2'-deoxyguanosine + triphosphate + H(+). Its function is as follows. dGTPase preferentially hydrolyzes dGTP over the other canonical NTPs. The polypeptide is Deoxyguanosinetriphosphate triphosphohydrolase (Escherichia coli O7:K1 (strain IAI39 / ExPEC)).